The sequence spans 443 residues: Xaa-Pro dipeptidase (443 aa).

The Mn(2+) site is built by aspartate 246, aspartate 257, histidine 339, glutamate 384, and glutamate 423.

It belongs to the peptidase M24B family. Bacterial-type prolidase subfamily. Mn(2+) serves as cofactor.

The catalysed reaction is Xaa-L-Pro dipeptide + H2O = an L-alpha-amino acid + L-proline. Its function is as follows. Splits dipeptides with a prolyl residue in the C-terminal position. This chain is Xaa-Pro dipeptidase, found in Salmonella paratyphi B (strain ATCC BAA-1250 / SPB7).